Here is a 273-residue protein sequence, read N- to C-terminus: DnaJ homolog subfamily C member 27 (273 aa).

The tract at residues 1-18 (MEANMPKRKEPGRSLRIK) is required for interaction with MAPK1. GTP contacts are provided by residues 23–30 (GNAEVGKS), 71–75 (DMAGH), and 134–137 (NKID). A J domain is found at 217 to 273 (DSWDMLGVKPGASRDEVNKAYRKLAVLLHPDKCVAPGSEDAFKAVVNARTALLKNIK).

The protein belongs to the small GTPase superfamily. Rab family. As to quaternary structure, interacts directly with MAPK1 (wild-type and kinase-deficient forms). Interacts directly (in GTP-bound form) with MAP2K1 (wild-type and kinase-deficient forms). In terms of tissue distribution, overexpressed in gastrointestinal cancers; expression correlates with later tumor-node-metastasis stages of colorectal cancers.

It is found in the nucleus. Functionally, GTPase which can activate the MEK/ERK pathway and induce cell transformation when overexpressed. May act as a nuclear scaffold for MAPK1, probably by association with MAPK1 nuclear export signal leading to enhanced ERK1/ERK2 signaling. In Homo sapiens (Human), this protein is DnaJ homolog subfamily C member 27 (DNAJC27).